A 237-amino-acid chain; its full sequence is Probable glutathione-independent glyoxalase SNO4 (237 aa).

Residues Cys-138, His-139, and Glu-170 contribute to the active site.

Belongs to the peptidase C56 family. HSP31-like subfamily. As to quaternary structure, homodimer.

The protein resides in the cytoplasm. It localises to the P-body. It catalyses the reaction methylglyoxal + H2O = (R)-lactate + H(+). In terms of biological role, catalyzes the conversion of methylglyoxal (MG) to D-lactate in a single glutathione (GSH)-independent step. May play a role in detoxifying endogenously produced glyoxals. Involved in protection against reactive oxygen species (ROS). Important for viability in stationary phase. May negatively regulate TORC1 in response to nutrient limitation. This chain is Probable glutathione-independent glyoxalase SNO4, found in Saccharomyces cerevisiae (strain ATCC 204508 / S288c) (Baker's yeast).